A 147-amino-acid chain; its full sequence is Cytochrome c oxidase subunit 3 (147 aa).

The next 4 membrane-spanning stretches (helical) occupy residues 13-33 (FQIP…VTWA), 48-68 (GLFI…YEYF), 83-103 (FFMA…FLLI), and 125-145 (AWYW…IYWW).

It belongs to the cytochrome c oxidase subunit 3 family. Component of the cytochrome c oxidase (complex IV, CIV), a multisubunit enzyme composed of a catalytic core of 3 subunits and several supernumerary subunits. The complex exists as a monomer or a dimer and forms supercomplexes (SCs) in the inner mitochondrial membrane with ubiquinol-cytochrome c oxidoreductase (cytochrome b-c1 complex, complex III, CIII).

The protein localises to the mitochondrion inner membrane. It catalyses the reaction 4 Fe(II)-[cytochrome c] + O2 + 8 H(+)(in) = 4 Fe(III)-[cytochrome c] + 2 H2O + 4 H(+)(out). Functionally, component of the cytochrome c oxidase, the last enzyme in the mitochondrial electron transport chain which drives oxidative phosphorylation. The respiratory chain contains 3 multisubunit complexes succinate dehydrogenase (complex II, CII), ubiquinol-cytochrome c oxidoreductase (cytochrome b-c1 complex, complex III, CIII) and cytochrome c oxidase (complex IV, CIV), that cooperate to transfer electrons derived from NADH and succinate to molecular oxygen, creating an electrochemical gradient over the inner membrane that drives transmembrane transport and the ATP synthase. Cytochrome c oxidase is the component of the respiratory chain that catalyzes the reduction of oxygen to water. Electrons originating from reduced cytochrome c in the intermembrane space (IMS) are transferred via the dinuclear copper A center (CU(A)) of subunit 2 and heme A of subunit 1 to the active site in subunit 1, a binuclear center (BNC) formed by heme A3 and copper B (CU(B)). The BNC reduces molecular oxygen to 2 water molecules using 4 electrons from cytochrome c in the IMS and 4 protons from the mitochondrial matrix. This Spodoptera frugiperda (Fall armyworm) protein is Cytochrome c oxidase subunit 3 (COIII).